Reading from the N-terminus, the 598-residue chain is MSQAYQPDSTKTSAKTPVAPTVATLNPPKRKTLMRLLAYLKPYWWAILLTIIGFAINAATEIWIAKLLQYITDAINQNDQSKQDLFPFIIVMLFFVRGVGSFLGNYYTALVSRNLVYELRVEVFNKLLRLPSSFYLANPAGTISSKLIFDVEQVTAASTDSMKTLLRDGLTVVALMGFLLYSNWRLTLILFVVLPPILWLIRVASKRYLKLSKGIQETMGDVSHITNEVINGYQVVKNYGGQVYESKRFDVTSKKNLRQGMKVVVTNSINTPAVQLLMAMAMAVVVWLALRPAVIDDISAGQFISYIAAAGLLSKPVRSLTDVNQQLQRGLAAGESIFALLDEPEEADTGVLSPTLAGEIKLDNVSLVYPDSTVALHDFNLDIRAGETVALVGRSGAGKSSLVNLLTRTLTTSSGQITLDGMPIEDIKLESLRAQIAMVNQQVVLFNTTVFNNIAYGSLAHKTPAEVEQAAKDAFAHDFIMQMPNGYQSEIGAEGLQLSGGQRQRLSIARALLKDAPILILDEATSALDNESEYYIQKALDNIMKNRTTLVIAHRLTTIESADRIAVLDGGQIVELGTHTQLMQLHGHYAQMYARDFE.

The segment covering 1 to 15 (MSQAYQPDSTKTSAK) has biased composition (polar residues). The interval 1–21 (MSQAYQPDSTKTSAKTPVAPT) is disordered. 4 helical membrane-spanning segments follow: residues 44–64 (WWAI…EIWI), 85–105 (LFPF…FLGN), 172–192 (VVAL…ILFV), and 269–289 (INTP…VWLA). Residues 48-329 (LLTIIGFAIN…LTDVNQQLQR (282 aa)) form the ABC transmembrane type-1 domain. One can recognise an ABC transporter domain in the interval 360–595 (IKLDNVSLVY…HGHYAQMYAR (236 aa)). 393–400 (GRSGAGKS) lines the ATP pocket.

The protein belongs to the ABC transporter superfamily. Lipid exporter (TC 3.A.1.106) family. As to quaternary structure, homodimer.

It is found in the cell inner membrane. It catalyses the reaction ATP + H2O + lipid A-core oligosaccharideSide 1 = ADP + phosphate + lipid A-core oligosaccharideSide 2.. Functionally, involved in lipopolysaccharide (LPS) biosynthesis. Translocates lipid A-core from the inner to the outer leaflet of the inner membrane. Transmembrane domains (TMD) form a pore in the inner membrane and the ATP-binding domain (NBD) is responsible for energy generation. The chain is ATP-dependent lipid A-core flippase from Psychrobacter cryohalolentis (strain ATCC BAA-1226 / DSM 17306 / VKM B-2378 / K5).